The chain runs to 103 residues: Large ribosomal subunit protein bL21 (103 aa).

The protein belongs to the bacterial ribosomal protein bL21 family. Part of the 50S ribosomal subunit. Contacts protein L20.

Its function is as follows. This protein binds to 23S rRNA in the presence of protein L20. In Actinobacillus pleuropneumoniae serotype 7 (strain AP76), this protein is Large ribosomal subunit protein bL21.